The following is a 738-amino-acid chain: Putative cyclic nucleotide-gated ion channel 7 (738 aa).

At 1–104 (MYKSQYISGQ…DKTLLVWNRL (104 aa)) the chain is on the cytoplasmic side. Residues 105 to 125 (FVISCILAVSVDPLFFYLPIV) form a helical membrane-spanning segment. The Extracellular portion of the chain corresponds to 126-139 (DNSGSSCIGIDTKL). The chain crosses the membrane as a helical span at residues 140 to 160 (AVTTTTLRTIVDVFYLTRMAL). At 161-193 (QFRTAYIAPSSRVFGRGELVIDPAKIAERYLTR) the chain is on the cytoplasmic side. Residues 194–214 (YFVVDFLAVLPLPQIAVWKFL) form a helical membrane-spanning segment. At 215-227 (HGSKGSDVLPTKT) the chain is on the extracellular side. Residues 228–248 (ALLNIVIVQYIPRFVRFIPLT) traverse the membrane as a helical segment. Over 249–268 (SELKKTAGAFAEGAWAGAAY) the chain is Cytoplasmic. The helical transmembrane segment at 269–289 (YLLWYMLASHITGAFWYMLSV) threads the bilayer. Residues 290 to 395 (ERNDTCWRFA…GQGLQTSTFP (106 aa)) are Extracellular-facing. Residues 396–416 (GEVLFSIAIAIAGLLLFALLI) form a helical membrane-spanning segment. Over 417–738 (GNMQTYLQSL…KPPEPDFDAE (322 aa)) the chain is Cytoplasmic. Residues 502–632 (LFAN…TFRF) and Glu573 contribute to the a nucleoside 3',5'-cyclic phosphate site. The calmodulin-binding stretch occupies residues 618–633 (FRRLHSRQVQQTFRFY). An IQ domain is found at 638–667 (RTWASCFIQAAWRRYSRRKNAELRRIEEKE). Disordered regions lie at residues 671-693 (GYED…SESS) and 715-738 (LRSS…FDAE).

Belongs to the cyclic nucleotide-gated cation channel (TC 1.A.1.5) family. In terms of assembly, homotetramer or heterotetramer.

It is found in the cell membrane. Its function is as follows. Putative cyclic nucleotide-gated ion channel. This chain is Putative cyclic nucleotide-gated ion channel 7 (CNGC7), found in Arabidopsis thaliana (Mouse-ear cress).